The following is a 446-amino-acid chain: RUN domain-containing protein 3A (446 aa).

The interaction with RAP2A stretch occupies residues 1–298 (METSFVQTTM…LQLQLEEAAA (298 aa)). One can recognise an RUN domain in the interval 52 to 189 (DDSSEEFVNF…IDFSFCLKGE (138 aa)). At T215 the chain carries Phosphothreonine. The segment at 216–239 (DEEERHSAESSTSEDNSPEHPYLP) is disordered. S232 carries the phosphoserine modification. The stretch at 267–322 (YLEELVRLRESQLKDLEAENRRLQLQLEEAAAQNQREKRELEGVILELQEQLTGLI) forms a coiled coil. Polar residues predominate over residues 372 to 384 (PLSAEASLSSDSQ). Residues 372-404 (PLSAEASLSSDSQRLGEGTRDEEPWGPIGKDPT) form a disordered region. S416 and S419 each carry phosphoserine.

The protein belongs to the RUNDC3 family. In terms of assembly, interacts with the GTP-bound form of RAP2A.

May act as an effector of RAP2A in neuronal cells. The chain is RUN domain-containing protein 3A (RUNDC3A) from Pongo abelii (Sumatran orangutan).